A 1144-amino-acid polypeptide reads, in one-letter code: Type II inositol polyphosphate 5-phosphatase 14 (1144 aa).

2 disordered regions span residues 15–67 (ASLV…FDSS) and 81–118 (GRTS…DDIE). WD repeat units follow at residues 158–196 (ETQT…EVGC), 216–255 (VPTS…TTTA), 269–307 (AHRG…KSLV), 445–483 (EDTR…LREV), and 524–561 (SHNE…PLDS). Catalytic stretches follow at residues 791–807 (DLVA…FGIT) and 870–885 (KKRI…YRDN). Residue Lys949 forms a Glycyl lysine isopeptide (Lys-Gly) (interchain with G-Cter in ubiquitin) linkage. Positions 1111–1131 (TTMTKNLEGSTRYQTDANRGG) are enriched in polar residues. Residues 1111–1144 (TTMTKNLEGSTRYQTDANRGGSTRHRTDDSTRRG) are disordered. Over residues 1135–1144 (HRTDDSTRRG) the composition is skewed to basic and acidic residues.

The protein belongs to the inositol polyphosphate 5-phosphatase family. It depends on Mg(2+) as a cofactor. Expressed in young seedlings and flowers.

The enzyme catalyses a 1,2-diacyl-sn-glycero-3-phospho-(1D-myo-inositol-4,5-bisphosphate) + H2O = a 1,2-diacyl-sn-glycero-3-phospho-(1D-myo-inositol 4-phosphate) + phosphate. It carries out the reaction a 1,2-diacyl-sn-glycero-3-phospho-(1D-myo-inositol-3,4,5-trisphosphate) + H2O = a 1,2-diacyl-sn-glycero-3-phospho-(1D-myo-inositol-3,4-bisphosphate) + phosphate. It catalyses the reaction 1D-myo-inositol 1,4,5-trisphosphate + H2O = 1D-myo-inositol 1,4-bisphosphate + phosphate. Its function is as follows. Has phosphatase activity toward PtdIns(4,5)P2, PtdIns(3,4,5)P3 and Ins(1,4,5)P3. This is Type II inositol polyphosphate 5-phosphatase 14 from Arabidopsis thaliana (Mouse-ear cress).